A 236-amino-acid polypeptide reads, in one-letter code: MICOS complex subunit MIC25 (236 aa).

Basic and acidic residues predominate over residues 1–11 (MGSAESREGRR). Residues 1–22 (MGSAESREGRRASFGMDEEERV) are disordered. Glycine 2 carries N-myristoyl glycine lipidation. Phosphoserine is present on residues serine 13 and serine 31. 2 disordered regions span residues 34–86 (VVNR…VQVD) and 109–132 (EREA…DQEK). Low complexity predominate over residues 48-58 (GLLAPPAAALG). Basic and acidic residues-rich tracts occupy residues 62 to 71 (GREKDSKPPR) and 122 to 132 (RRGEGGVDQEK). A coiled-coil region spans residues 127-167 (GVDQEKQRLAQRARELESQEEELRCRDAFYKEQLGRLERQN). In terms of domain architecture, CHCH spans 195–236 (EPVCSGLQAQILRCYRDRLQEVLLCADLVRAYQHCVSSAHKG). 2 short sequence motifs (cx9C motif) span residues 198–208 (CSGLQAQILRC) and 219–229 (CADLVRAYQHC). Disulfide bonds link cysteine 198–cysteine 229 and cysteine 208–cysteine 219.

This sequence belongs to the MICOS complex subunit Mic19 family. Metazoan Mic25 subfamily. In terms of assembly, component of the mitochondrial contact site and cristae organizing system (MICOS) complex, composed of at least MICOS10/MIC10, CHCHD3/MIC19, CHCHD6/MIC25, APOOL/MIC27, IMMT/MIC60, APOO/MIC23/MIC26 and MICOS13/MIC13. This complex was also known under the names MINOS or MitOS complex. The MICOS complex associates with mitochondrial outer membrane proteins SAMM50, MTX1 and MTX2 (together described as components of the mitochondrial outer membrane sorting assembly machinery (SAM) complex) and DNAJC11, mitochondrial inner membrane protein TMEM11 and with HSPA9. The MICOS and SAM complexes together with DNAJC11 are part of a large protein complex spanning both membranes termed the mitochondrial intermembrane space bridging (MIB) complex. Interacts with DISC1. Interacts with IMMT/MIC60.

Its subcellular location is the mitochondrion inner membrane. It localises to the mitochondrion. Component of the MICOS complex, a large protein complex of the mitochondrial inner membrane that plays crucial roles in the maintenance of crista junctions, inner membrane architecture, and formation of contact sites to the outer membrane. The protein is MICOS complex subunit MIC25 (CHCHD6) of Bos taurus (Bovine).